We begin with the raw amino-acid sequence, 468 residues long: ATP synthase subunit beta (468 aa).

155 to 162 serves as a coordination point for ATP; it reads GGAGVGKT.

This sequence belongs to the ATPase alpha/beta chains family. As to quaternary structure, F-type ATPases have 2 components, CF(1) - the catalytic core - and CF(0) - the membrane proton channel. CF(1) has five subunits: alpha(3), beta(3), gamma(1), delta(1), epsilon(1). CF(0) has three main subunits: a(1), b(2) and c(9-12). The alpha and beta chains form an alternating ring which encloses part of the gamma chain. CF(1) is attached to CF(0) by a central stalk formed by the gamma and epsilon chains, while a peripheral stalk is formed by the delta and b chains.

It localises to the cell membrane. The catalysed reaction is ATP + H2O + 4 H(+)(in) = ADP + phosphate + 5 H(+)(out). Functionally, produces ATP from ADP in the presence of a proton gradient across the membrane. The catalytic sites are hosted primarily by the beta subunits. The polypeptide is ATP synthase subunit beta (Streptococcus pyogenes serotype M6 (strain ATCC BAA-946 / MGAS10394)).